Consider the following 343-residue polypeptide: MSAFTPASEVLLRHSDDFEQSRILFAGDLQDDLPARLDTAASRAHTQQFHHWQVLSRQMGDNARFSLVATVDDVADCDTLIYYWPKNKPEAQFQLMNLLSLLPVGTDIFVVGENRSGVRSAEQMLADYAPLNKVDSARRCGLYFGRLEKQPVFDADKFWGEYSVDGLTVKTLPSVFSRDGLDVGSQLLLSTLTPHTKGKVLDVGCGAGVLSVAFARHSPKIRLTLCDVSAPAVEASRATLAANCVEGEVFASNVFSEVKGRFDMIISNPPFHDGMQTSLDAAQTLIRGAVRHLNSGGELRIVANAFLPYPDVLDETFGFHEVIAQTGRFKVYRAIMTRQAKKG.

It belongs to the methyltransferase superfamily. RsmC family. Monomer.

It localises to the cytoplasm. The enzyme catalyses guanosine(1207) in 16S rRNA + S-adenosyl-L-methionine = N(2)-methylguanosine(1207) in 16S rRNA + S-adenosyl-L-homocysteine + H(+). In terms of biological role, specifically methylates the guanine in position 1207 of 16S rRNA in the 30S particle. The sequence is that of Ribosomal RNA small subunit methyltransferase C from Shigella boydii serotype 4 (strain Sb227).